The primary structure comprises 312 residues: Pantothenate kinase (312 aa).

Residue 97–104 participates in ATP binding; the sequence is GSVAVGKS.

It belongs to the prokaryotic pantothenate kinase family.

It is found in the cytoplasm. It carries out the reaction (R)-pantothenate + ATP = (R)-4'-phosphopantothenate + ADP + H(+). The protein operates within cofactor biosynthesis; coenzyme A biosynthesis; CoA from (R)-pantothenate: step 1/5. The protein is Pantothenate kinase of Corynebacterium glutamicum (strain ATCC 13032 / DSM 20300 / JCM 1318 / BCRC 11384 / CCUG 27702 / LMG 3730 / NBRC 12168 / NCIMB 10025 / NRRL B-2784 / 534).